The primary structure comprises 559 residues: POU domain protein 1 (559 aa).

The POU-specific domain maps to 259 to 333; sequence EDLPSSDDLE…LLQKWLHEAD (75 aa). The homeobox DNA-binding region spans 351–410; that stretch reads KRKKRTSIEANVKSILESSFMKLSKPSAQDISSLAEKLSLEKEVVRVWFCNRRQKEKRIT.

It belongs to the POU transcription factor family.

The protein resides in the nucleus. This Dugesia japonica (Planarian) protein is POU domain protein 1 (POU1).